The primary structure comprises 194 residues: Fe/S biogenesis protein NfuA (194 aa).

[4Fe-4S] cluster is bound by residues Cys152 and Cys155.

Belongs to the NfuA family. In terms of assembly, homodimer. Requires [4Fe-4S] cluster as cofactor.

In terms of biological role, involved in iron-sulfur cluster biogenesis. Binds a 4Fe-4S cluster, can transfer this cluster to apoproteins, and thereby intervenes in the maturation of Fe/S proteins. Could also act as a scaffold/chaperone for damaged Fe/S proteins. The sequence is that of Fe/S biogenesis protein NfuA from Pseudomonas aeruginosa (strain LESB58).